Here is a 171-residue protein sequence, read N- to C-terminus: Ribosome maturation factor RimM (171 aa).

The 74-residue stretch at 97 to 170 (EGEYYYHEVI…QVTIHVMEGL (74 aa)) folds into the PRC barrel domain.

The protein belongs to the RimM family. In terms of assembly, binds ribosomal protein uS19.

It localises to the cytoplasm. In terms of biological role, an accessory protein needed during the final step in the assembly of 30S ribosomal subunit, possibly for assembly of the head region. Essential for efficient processing of 16S rRNA. May be needed both before and after RbfA during the maturation of 16S rRNA. It has affinity for free ribosomal 30S subunits but not for 70S ribosomes. The polypeptide is Ribosome maturation factor RimM (Bacillus cytotoxicus (strain DSM 22905 / CIP 110041 / 391-98 / NVH 391-98)).